A 135-amino-acid chain; its full sequence is Large ribosomal subunit protein uL18 (135 aa).

The disordered stretch occupies residues 1–23 (MSQTANQKAKRIPLGKDASTKRR).

It belongs to the universal ribosomal protein uL18 family. In terms of assembly, part of the 50S ribosomal subunit; part of the 5S rRNA/L5/L18/L25 subcomplex. Contacts the 5S and 23S rRNAs.

Functionally, this is one of the proteins that bind and probably mediate the attachment of the 5S RNA into the large ribosomal subunit, where it forms part of the central protuberance. This Rhodococcus jostii (strain RHA1) protein is Large ribosomal subunit protein uL18.